The following is a 65-amino-acid chain: Movement protein TGBp3 (65 aa).

Topologically, residues 1-6 (MLPKMQ) are lumenal. A helical membrane pass occupies residues 7-26 (PSAQCLIVFSLAFVLGWYVL). The Cytoplasmic segment spans residues 27 to 65 (RPGNTSCVLLITGESVRLVNCELTKDLVEAVLLRPLKHL).

Belongs to the Tymovirales TGBp3 protein family.

The protein localises to the host endoplasmic reticulum membrane. Functionally, plays a role in viral cell-to-cell propagation, by facilitating genome transport to neighboring plant cells through plasmosdesmata. May induce the formation of granular vesicles derived from the Endoplasmic reticulum, which align on actin filaments. The chain is Movement protein TGBp3 from Potato virus S (strain Peruvian).